We begin with the raw amino-acid sequence, 256 residues long: Adenylate kinase (256 aa).

ATP is bound at residue 45–50 (GAGKGT). Positions 67-96 (ATGDLLRQQVAMGTDLGKQAKKIMDQGALV) are NMP. AMP is bound by residues threonine 68, arginine 73, 94 to 96 (ALV), 123 to 126 (GFPR), and glutamine 130. An LID region spans residues 164–201 (GRLIHPGSGRSYHKIFSPPKQPMKDDITGEPLVQRSDD). ATP-binding positions include arginine 165 and 174–175 (SY). Arginine 198 and arginine 209 together coordinate AMP. Glutamine 237 serves as a coordination point for ATP.

It belongs to the adenylate kinase family. AK2 subfamily. As to quaternary structure, monomer.

Its subcellular location is the cytoplasm. It is found in the cytosol. The protein localises to the mitochondrion intermembrane space. It carries out the reaction AMP + ATP = 2 ADP. In terms of biological role, catalyzes the reversible transfer of the terminal phosphate group between ATP and AMP. Plays an important role in cellular energy homeostasis and in adenine nucleotide metabolism. Adenylate kinase activity is critical for regulation of the phosphate utilization and the AMP de novo biosynthesis pathways. In Malassezia globosa (strain ATCC MYA-4612 / CBS 7966) (Dandruff-associated fungus), this protein is Adenylate kinase.